The chain runs to 204 residues: MGDMYDESFDKSGGPADLMDDSWVESVSWKDLLKKLHSIKFALQSGRDEITGLLAALNRQCPYSPYEQFPDKKVYFLLDSRANSALGVIQNASAFKRRADEKNAVAGVTNIPANPNTTVTTNQGSTTTTKANTGSTLEEDLYTYYKFDDASTAFHKSLTSLENMELKSYYRRNFEKVFGIKFGGAAASSSAPPPASGGPIRPNP.

2 disordered regions span residues 112-132 and 185-204; these read PANPNTTVTTNQGSTTTTKAN and AAASSSAPPPASGGPIRPNP. The span at 117–132 shows a compositional bias: low complexity; it reads TTVTTNQGSTTTTKAN. Residues 191 to 204 show a composition bias toward pro residues; sequence APPPASGGPIRPNP.

The protein belongs to the virgaviridae capsid protein family. Interacts with the 40 kDa protein; this interaction may play a role in vector transmission of the virus.

It localises to the virion. Functionally, capsid protein self-assembles to form rod-shaped virions about 22 nm in diameter with a central canal enclosing the viral genomic RNA. This Bidens pilosa (Hairy beggarticks) protein is Capsid protein (CP).